The chain runs to 355 residues: 3-isopropylmalate dehydrogenase (355 aa).

Substrate contacts are provided by arginine 98, arginine 108, arginine 132, and aspartate 223. Mg(2+)-binding residues include aspartate 223, aspartate 247, and aspartate 251. 283–295 (GSAPDIAGQQKAD) lines the NAD(+) pocket.

Belongs to the isocitrate and isopropylmalate dehydrogenases family. LeuB type 2 subfamily. In terms of assembly, homodimer. It depends on Mg(2+) as a cofactor. The cofactor is Mn(2+).

Its subcellular location is the cytoplasm. The catalysed reaction is (2R,3S)-3-isopropylmalate + NAD(+) = 4-methyl-2-oxopentanoate + CO2 + NADH. The protein operates within amino-acid biosynthesis; L-leucine biosynthesis; L-leucine from 3-methyl-2-oxobutanoate: step 3/4. Catalyzes the oxidation of 3-carboxy-2-hydroxy-4-methylpentanoate (3-isopropylmalate) to 3-carboxy-4-methyl-2-oxopentanoate. The product decarboxylates to 4-methyl-2 oxopentanoate. This chain is 3-isopropylmalate dehydrogenase, found in Clavibacter michiganensis subsp. michiganensis (strain NCPPB 382).